Here is a 460-residue protein sequence, read N- to C-terminus: Flavonol 3-O-glucosyltransferase (460 aa).

His-23 serves as the catalytic Proton acceptor. 2 residues coordinate an anthocyanidin: His-23 and Gln-88. Asp-123 acts as the Charge relay in catalysis. A UDP-alpha-D-glucose-binding site is contributed by Thr-145. His-154 is a binding site for an anthocyanidin. Ala-339, Gln-341, His-356, Trp-359, Asn-360, Ser-361, and Glu-364 together coordinate UDP-alpha-D-glucose. Gly-379 contacts an anthocyanidin. Residues Asp-380 and Gln-381 each contribute to the UDP-alpha-D-glucose site.

This sequence belongs to the UDP-glycosyltransferase family.

It catalyses the reaction a flavonol + UDP-alpha-D-glucose = a flavonol 3-O-beta-D-glucoside + UDP + H(+). The enzyme catalyses quercetin + UDP-alpha-D-glucose = quercetin 3-O-beta-D-glucoside + UDP + H(+). It participates in flavonoid metabolism. Flavonol 3-O-glucosyltransferase that catalyzes the transfer of glucose from UDP-glucose to the 3-OH position of quercetin and kaempferol. Possesses high quercetin 3-O-glucosyltransferase activity in vitro. Catalyzes the glycosylation of anthocyanins from UDP-glucose. Also active in vitro on benzoates and benzoate derivatives. The chain is Flavonol 3-O-glucosyltransferase from Arabidopsis thaliana (Mouse-ear cress).